A 506-amino-acid chain; its full sequence is Dipeptide and tripeptide permease A (506 aa).

At 1-36 the chain is on the cytoplasmic side; sequence MSTANNNSEHPESVSLNAFKQPKAFYLIFSIELWER. A helical transmembrane segment spans residues 37 to 57; the sequence is FGYYGLQGIMAVYLVKMLGLS. Topologically, residues 58-61 are periplasmic; it reads EADS. Residues 62–82 form a helical membrane-spanning segment; the sequence is ITLFSSFSALVYGFVAIGGWL. At 83-91 the chain is on the cytoplasmic side; that stretch reads GDKVLGSKR. Transmembrane regions (helical) follow at residues 92–112 and 113–133; these read VIVLGALVLAVGYAMVAYSGH and EIFWVYLGMATIAVGSGLFKA. Residues 134-155 lie on the Cytoplasmic side of the membrane; the sequence is NPSSLLSTCYEKDDPRLDGAFT. A helical transmembrane segment spans residues 156–176; sequence MYYMSVNIGSFLSMLATPWLA. The Periplasmic portion of the chain corresponds to 177–180; the sequence is AKYG. A helical membrane pass occupies residues 181–201; it reads WSVAFSLSVVGMLITLVNFMV. Residues 202 to 222 lie on the Cytoplasmic side of the membrane; the sequence is CHKWVKQHGSKPDFKPLQVKK. Residues 223 to 243 form a helical membrane-spanning segment; the sequence is LLMVLVGVVALVALSSWLLHN. Topologically, residues 244 to 248 are periplasmic; the sequence is QIIAR. The helical transmembrane segment at 249–269 threads the bilayer; sequence WALAIVSIGIVIVFAKETFAL. Over 270–276 the chain is Cytoplasmic; the sequence is HGAARRK. A helical membrane pass occupies residues 277-297; that stretch reads MIVAFLLMLEAVVFFVLYSQM. The Periplasmic segment spans residues 298–322; that stretch reads PTSLNFFAIHNVEHNILGLAFEPEQ. Residues 323–343 traverse the membrane as a helical segment; that stretch reads YQALNPFWIMLASPILAALYN. At 344–354 the chain is on the cytoplasmic side; it reads KMGDRLPMPHK. The chain crosses the membrane as a helical span at residues 355-375; sequence FAFGMILCSGAFLVLPWGASF. At 376-385 the chain is on the periplasmic side; it reads ANEQGIVSVN. Residues 386–406 form a helical membrane-spanning segment; it reads WLILSYALQSIGELMISGLGL. Residues 407–416 lie on the Cytoplasmic side of the membrane; that stretch reads AMVAQLVPQR. A helical transmembrane segment spans residues 417–437; the sequence is LMGFIMGSWFLTTAAAALIAG. Residues 438–461 lie on the Periplasmic side of the membrane; the sequence is KVAGLTAVPGDVNDAHASLAIYSH. Residues 462 to 482 traverse the membrane as a helical segment; it reads VFMQIGIATAVIAILMMLTAP. Topologically, residues 483 to 506 are cytoplasmic; that stretch reads KLHRMTLDTAEDTEKKAQAAAITN.

This sequence belongs to the major facilitator superfamily. Proton-dependent oligopeptide transporter (POT/PTR) (TC 2.A.17) family. DtpA subfamily.

It localises to the cell inner membrane. Proton-dependent permease that transports di- and tripeptides. In Serratia proteamaculans (strain 568), this protein is Dipeptide and tripeptide permease A.